Here is a 106-residue protein sequence, read N- to C-terminus: Large ribosomal subunit protein uL24 (106 aa).

Belongs to the universal ribosomal protein uL24 family. Part of the 50S ribosomal subunit.

Functionally, one of two assembly initiator proteins, it binds directly to the 5'-end of the 23S rRNA, where it nucleates assembly of the 50S subunit. In terms of biological role, one of the proteins that surrounds the polypeptide exit tunnel on the outside of the subunit. This chain is Large ribosomal subunit protein uL24, found in Acidovorax sp. (strain JS42).